Reading from the N-terminus, the 144-residue chain is MNFKYIVAVSFLIASAYARSEENEIQSLSQRDVLEEESLREMRGIGTKILGGVKTALKGALKELASTYVNGKRTAEEHEVMKRLETVMRDLDSLDYPEEASERETRGFNQEEIANLFTKKEKRILGPVLGLVSNALGGLLKNIG.

The N-terminal stretch at 1-18 (MNFKYIVAVSFLIASAYA) is a signal peptide. Positions 19–43 (RSEENEIQSLSQRDVLEEESLREMR) are excised as a propeptide. N70 is subject to Asparagine amide. Residues 74 to 123 (TAEEHEVMKRLETVMRDLDSLDYPEEASERETRGFNQEEIANLFTKKEKR) constitute a propeptide that is removed on maturation. I143 is subject to Isoleucine amide.

Belongs to the bombinin family. In terms of tissue distribution, expressed by the skin glands.

It is found in the secreted. Functionally, maximin-2 shows antibacterial activity against both Gram-positive and Gram-negative bacteria. It also shows antimicrobial activity against the fungus C.albicans, but not against A.flavus nor P.uticale. It has little hemolytic activity. In terms of biological role, maximin-H8 shows antimicrobial activity against bacteria and against the fungus C.albicans. Shows strong hemolytic activity. This Bombina maxima (Giant fire-bellied toad) protein is Maximins 2/H8 type 1.